The chain runs to 202 residues: Putative 3-methyladenine DNA glycosylase (202 aa).

It belongs to the DNA glycosylase MPG family.

This chain is Putative 3-methyladenine DNA glycosylase, found in Clostridioides difficile (strain 630) (Peptoclostridium difficile).